The following is a 44-amino-acid chain: Large ribosomal subunit protein bL34 (44 aa).

The protein belongs to the bacterial ribosomal protein bL34 family.

The sequence is that of Large ribosomal subunit protein bL34 from Buchnera aphidicola subsp. Cinara cedri (strain Cc).